The chain runs to 380 residues: Queuine tRNA-ribosyltransferase (380 aa).

Asp96 acts as the Proton acceptor in catalysis. Substrate is bound by residues Asp96 to Phe100, Asp150, Gln193, and Gly220. An RNA binding region spans residues Gly251–Ser257. Residue Asp270 is the Nucleophile of the active site. The interval Thr275 to Arg279 is RNA binding; important for wobble base 34 recognition. Zn(2+) contacts are provided by Cys308, Cys310, Cys313, and His339.

This sequence belongs to the queuine tRNA-ribosyltransferase family. In terms of assembly, homodimer. Within each dimer, one monomer is responsible for RNA recognition and catalysis, while the other monomer binds to the replacement base PreQ1. The cofactor is Zn(2+).

It carries out the reaction 7-aminomethyl-7-carbaguanine + guanosine(34) in tRNA = 7-aminomethyl-7-carbaguanosine(34) in tRNA + guanine. Its pathway is tRNA modification; tRNA-queuosine biosynthesis. In terms of biological role, catalyzes the base-exchange of a guanine (G) residue with the queuine precursor 7-aminomethyl-7-deazaguanine (PreQ1) at position 34 (anticodon wobble position) in tRNAs with GU(N) anticodons (tRNA-Asp, -Asn, -His and -Tyr). Catalysis occurs through a double-displacement mechanism. The nucleophile active site attacks the C1' of nucleotide 34 to detach the guanine base from the RNA, forming a covalent enzyme-RNA intermediate. The proton acceptor active site deprotonates the incoming PreQ1, allowing a nucleophilic attack on the C1' of the ribose to form the product. After dissociation, two additional enzymatic reactions on the tRNA convert PreQ1 to queuine (Q), resulting in the hypermodified nucleoside queuosine (7-(((4,5-cis-dihydroxy-2-cyclopenten-1-yl)amino)methyl)-7-deazaguanosine). In Streptococcus pneumoniae (strain P1031), this protein is Queuine tRNA-ribosyltransferase.